A 105-amino-acid chain; its full sequence is Thioredoxin (105 aa).

One can recognise a Thioredoxin domain in the interval 2–105; sequence VKQIESKYAF…KLEATINELI (104 aa). Lys-3 is modified (N6-acetyllysine). Residue Lys-8 is modified to N6-succinyllysine. Active-site nucleophile residues include Cys-32 and Cys-35. Cysteines 32 and 35 form a disulfide. At Lys-39 the chain carries N6-acetyllysine. Residues Cys-62 and Cys-69 each carry the S-nitrosocysteine modification. Residue Cys-73 is modified to S-nitrosocysteine; alternate. Lys-94 carries the N6-acetyllysine; alternate modification. Lys-94 carries the N6-succinyllysine; alternate modification.

It belongs to the thioredoxin family. Homodimer; disulfide-linked. Interacts with TXNIP through the redox-active site. Interacts with MAP3K5 and CASP3. Interacts with APEX1; the interaction stimulates the FOS/JUN AP-1 DNA-binding activity in a redox-dependent manner. In the fully reduced protein, both Cys-69 and Cys-73 are nitrosylated in response to nitric oxide (NO). When two disulfide bonds are present in the protein, only Cys-73 is nitrosylated. Cys-73 can serve as donor for nitrosylation of target proteins.

The protein resides in the nucleus. The protein localises to the cytoplasm. It localises to the secreted. Participates in various redox reactions through the reversible oxidation of its active center dithiol to a disulfide and catalyzes dithiol-disulfide exchange reactions. Plays a role in the reversible S-nitrosylation of cysteine residues in target proteins, and thereby contributes to the response to intracellular nitric oxide. Nitrosylates the active site Cys of CASP3 in response to nitric oxide (NO), and thereby inhibits caspase-3 activity. Induces the FOS/JUN AP-1 DNA binding activity in ionizing radiation (IR) cells through its oxidation/reduction status and stimulates AP-1 transcriptional activity. This Ovis aries (Sheep) protein is Thioredoxin (TXN).